The sequence spans 240 residues: Aspartate/glutamate leucyltransferase (240 aa).

It belongs to the R-transferase family. Bpt subfamily.

It localises to the cytoplasm. The catalysed reaction is N-terminal L-glutamyl-[protein] + L-leucyl-tRNA(Leu) = N-terminal L-leucyl-L-glutamyl-[protein] + tRNA(Leu) + H(+). The enzyme catalyses N-terminal L-aspartyl-[protein] + L-leucyl-tRNA(Leu) = N-terminal L-leucyl-L-aspartyl-[protein] + tRNA(Leu) + H(+). Functions in the N-end rule pathway of protein degradation where it conjugates Leu from its aminoacyl-tRNA to the N-termini of proteins containing an N-terminal aspartate or glutamate. This chain is Aspartate/glutamate leucyltransferase, found in Thiobacillus denitrificans (strain ATCC 25259 / T1).